The following is a 54-amino-acid chain: Large ribosomal subunit protein bL33B (54 aa).

It belongs to the bacterial ribosomal protein bL33 family.

The chain is Large ribosomal subunit protein bL33B from Mycobacterium sp. (strain KMS).